The chain runs to 380 residues: Probable polyglutamine synthesis accessory protein MT0602 (380 aa).

This sequence belongs to the CapA family.

Functionally, could be involved in the biosynthesis, transport or localization of poly-alpha-L-glutamine (PLG), a cell wall component. Contributes to stress tolerance and virulence. This chain is Probable polyglutamine synthesis accessory protein MT0602, found in Mycobacterium tuberculosis (strain CDC 1551 / Oshkosh).